Consider the following 602-residue polypeptide: Proteasome-associated ATPase (602 aa).

A compositionally biased stretch (low complexity) spans 1 to 17 (MSGPRSGSGSDGSTGRP). The tract at residues 1-31 (MSGPRSGSGSDGSTGRPGDAESRRSAYEKET) is disordered. The segment covering 18–31 (GDAESRRSAYEKET) has biased composition (basic and acidic residues). The stretch at 19 to 106 (DAESRRSAYE…LKEEVDRLAQ (88 aa)) forms a coiled coil. 289 to 294 (GCGKTL) contacts ATP. A docks into pockets in the proteasome alpha-ring region spans residues 601–602 (YL).

This sequence belongs to the AAA ATPase family. As to quaternary structure, homohexamer. Assembles into a hexameric ring structure that caps the 20S proteasome core. Strongly interacts with the prokaryotic ubiquitin-like protein Pup through a hydrophobic interface; the interacting region of ARC lies in its N-terminal coiled-coil domain. There is one Pup binding site per ARC hexamer ring. Upon ATP-binding, the C-terminus of ARC interacts with the alpha-rings of the proteasome core, possibly by binding to the intersubunit pockets.

The protein operates within protein degradation; proteasomal Pup-dependent pathway. In terms of biological role, ATPase which is responsible for recognizing, binding, unfolding and translocation of pupylated proteins into the bacterial 20S proteasome core particle. May be essential for opening the gate of the 20S proteasome via an interaction with its C-terminus, thereby allowing substrate entry and access to the site of proteolysis. Thus, the C-termini of the proteasomal ATPase may function like a 'key in a lock' to induce gate opening and therefore regulate proteolysis. In Frankia casuarinae (strain DSM 45818 / CECT 9043 / HFP020203 / CcI3), this protein is Proteasome-associated ATPase.